We begin with the raw amino-acid sequence, 287 residues long: Troponin T, cardiac muscle (287 aa).

2 stretches are compositionally biased toward acidic residues: residues 1–31 (MSDV…EEAG) and 44–59 (EDGE…DGPV). 2 disordered regions span residues 1-85 (MSDV…GERV) and 124-208 (KDRI…EKKK). An N-acetylserine modification is found at Ser2. At Ser2 the chain carries Phosphoserine; by CK2. Pro residues predominate over residues 66–79 (APGPFMPNLVPPKI). Composition is skewed to basic and acidic residues over residues 124–173 (KDRI…DEAR) and 192–208 (QAER…EKKK). The residue at position 197 (Ser197) is a Phosphoserine; by PKC/PRKCA. Thr202 carries the phosphothreonine; by PKC/PRKCA and RAF1 modification. Thr283 is modified (phosphothreonine; by PKC/PRKCA).

Belongs to the troponin T family. In terms of processing, phosphorylation at Thr-202 by PRKCA induces significant reduction in myofilament calcium sensitivity and actomyosin ATPase activity.

In terms of biological role, troponin T is the tropomyosin-binding subunit of troponin, the thin filament regulatory complex which confers calcium-sensitivity to striated muscle actomyosin ATPase activity. The sequence is that of Troponin T, cardiac muscle (TNNT2) from Ovis aries (Sheep).